The primary structure comprises 228 residues: tRNA (guanine-N(1)-)-methyltransferase (228 aa).

S-adenosyl-L-methionine contacts are provided by residues glycine 111 and isoleucine 131 to leucine 136.

The protein belongs to the RNA methyltransferase TrmD family. Homodimer.

Its subcellular location is the cytoplasm. It carries out the reaction guanosine(37) in tRNA + S-adenosyl-L-methionine = N(1)-methylguanosine(37) in tRNA + S-adenosyl-L-homocysteine + H(+). Functionally, specifically methylates guanosine-37 in various tRNAs. This chain is tRNA (guanine-N(1)-)-methyltransferase, found in Pelagibacter ubique (strain HTCC1062).